A 417-amino-acid polypeptide reads, in one-letter code: D-amino acid dehydrogenase (417 aa).

3 to 17 (VVILGSGVVGVSTAW) contacts FAD.

This sequence belongs to the DadA oxidoreductase family. It depends on FAD as a cofactor.

It catalyses the reaction a D-alpha-amino acid + A + H2O = a 2-oxocarboxylate + AH2 + NH4(+). The protein operates within amino-acid degradation; D-alanine degradation; NH(3) and pyruvate from D-alanine: step 1/1. Its function is as follows. Oxidative deamination of D-amino acids. In Pectobacterium atrosepticum (strain SCRI 1043 / ATCC BAA-672) (Erwinia carotovora subsp. atroseptica), this protein is D-amino acid dehydrogenase.